The sequence spans 292 residues: Poly-beta-1,6-N-acetyl-D-glucosamine N-deacetylase (292 aa).

Residues 1-28 (MKYRKFIILVLSILIILPVSTLDGHHIA) form the signal peptide. A NodB homology domain is found at 114–292 (RSVWINFDDM…WDGFHEKDET (179 aa)).

The protein belongs to the polysaccharide deacetylase family.

The protein resides in the secreted. The protein localises to the cell wall. Functionally, catalyzes the N-deacetylation of poly-beta-1,6-N-acetyl-D-glucosamine (PNAG, also referred to as PIA), a biofilm adhesin polysaccharide. N-deacetylation is crucial for attachment of the polysaccharide to the bacterial cell surface; it leads to the introduction of positive charges in the otherwise neutral PIA polymer, allowing electrostatic interactions. In Staphylococcus aureus (strain COL), this protein is Poly-beta-1,6-N-acetyl-D-glucosamine N-deacetylase (icaB).